Here is a 351-residue protein sequence, read N- to C-terminus: DNA-directed RNA polymerase subunit alpha (351 aa).

Residues 1–245 form an alpha N-terminal domain (alpha-NTD) region; it reads MPRRNLLKGF…EHFTVFVNFD (245 aa). The interval 261 to 351 is alpha C-terminal domain (alpha-CTD); that stretch reads AVLELLNTKI…MRQKEEIDEA (91 aa).

This sequence belongs to the RNA polymerase alpha chain family. Homodimer. The RNAP catalytic core consists of 2 alpha, 1 beta, 1 beta' and 1 omega subunit. When a sigma factor is associated with the core the holoenzyme is formed, which can initiate transcription.

It carries out the reaction RNA(n) + a ribonucleoside 5'-triphosphate = RNA(n+1) + diphosphate. Functionally, DNA-dependent RNA polymerase catalyzes the transcription of DNA into RNA using the four ribonucleoside triphosphates as substrates. The chain is DNA-directed RNA polymerase subunit alpha from Treponema pallidum (strain Nichols).